The sequence spans 155 residues: MRRRRAEKRQIPPDPVFGDVLVAKLINRVMWDGKKTIAQKIVYGAFDIIREKTKKDPLEVFRQAVENVKPVLEVRPRRVGGATYQVPIEVQEPRRTSLALRWIVEAARAKKGRPMKEKLAEEIIAAYNNTGTAIKKKEDTHRMAEANRAFAHYRW.

It belongs to the universal ribosomal protein uS7 family. Part of the 30S ribosomal subunit. Contacts proteins S9 and S11.

Functionally, one of the primary rRNA binding proteins, it binds directly to 16S rRNA where it nucleates assembly of the head domain of the 30S subunit. Is located at the subunit interface close to the decoding center, probably blocks exit of the E-site tRNA. This chain is Small ribosomal subunit protein uS7, found in Thermotoga maritima (strain ATCC 43589 / DSM 3109 / JCM 10099 / NBRC 100826 / MSB8).